The following is a 515-amino-acid chain: Glycosyltransferase family 92 protein F59C6.8 (515 aa).

Residues 18-38 traverse the membrane as a helical segment; the sequence is LFIFIAVCLGFLIAVTILAGL. One can recognise a GT92 domain in the interval 163-456; the sequence is RKVVACFSPL…IEVCYNRIFY (294 aa).

This sequence belongs to the glycosyltransferase 92 family.

It is found in the membrane. The protein is Glycosyltransferase family 92 protein F59C6.8 of Caenorhabditis elegans.